Here is a 290-residue protein sequence, read N- to C-terminus: Glycine--tRNA ligase alpha subunit (290 aa).

Belongs to the class-II aminoacyl-tRNA synthetase family. Tetramer of two alpha and two beta subunits.

The protein localises to the cytoplasm. The catalysed reaction is tRNA(Gly) + glycine + ATP = glycyl-tRNA(Gly) + AMP + diphosphate. The sequence is that of Glycine--tRNA ligase alpha subunit from Syntrophobacter fumaroxidans (strain DSM 10017 / MPOB).